A 1140-amino-acid chain; its full sequence is MSYNYVVTAQKPTAVNGCVTGHFTSAEDLNLLIAKNTRLEIYVVTAEGLRPVKEVGMYGKIAVMELFRPKGESKDLLFILTAKYNACILEYKQSGESIDIITRAHGNVQDRIGRPSETGIIGIIDPECRMIGLRLYDGLFKVIPLDRDNKELKAFNIRLEELHVIDVKFLYGCQAPTICFVYQDPQGRHVKTYEVSLREKEFNKGPWKQENVEAEASMVIAVPEPFGGAIIIGQESITYHNGDKYLAIAPPIIKQSTIVCHNRVDPNGSRYLLGDMEGRLFMLLLEKEEQMDGTVTLKDLRVELLGETSIAECLTYLDNGVVFVGSRLGDSQLVKLNVDSNEQGSYVVAMETFTNLGPIVDMCVVDLERQGQGQLVTCSGAFKEGSLRIIRNGIGIHEHASIDLPGIKGLWPLRSDPNRETDDTLVLSFVGQTRVLMLNGEEVEETELMGFVDDQQTFFCGNVAHQQLIQITSASVRLVSQEPKALVSEWKEPQAKNISVASCNSSQVVVAVGRALYYLQIHPQELRQISHTEMEHEVACLDITPLGDSNGLSPLCAIGLWTDISARILKLPSFELLHKEMLGGEIIPRSILMTTFESSHYLLCALGDGALFYFGLNIETGLLSDRKKVTLGTQPTVLRTFRSLSTTNVFACSDRPTVIYSSNHKLVFSNVNLKEVNYMCPLNSDGYPDSLALANNSTLTIGTIDEIQKLHIRTVPLYESPRKICYQEVSQCFGVLSSRIEVQDTSGGTTALRPSASTQALSSSVSSSKLFSSSTAPHETSFGEEVEVHNLLIIDQHTFEVLHAHQFLQNEYALSLVSCKLGKDPNTYFIVGTAMVYPEEAEPKQGRIVVFQYSDGKLQTVAEKEVKGAVYSMVEFNGKLLASINSTVRLYEWTTEKELRTECNHYNNIMALYLKTKGDFILVGDLMRSVLLLAYKPMEGNFEEIARDFNPNWMSAVEILDDDNFLGAENAFNLFVCQKDSAATTDEERQHLQEVGLFHLGEFVNVFCHGSLVMQNLGETSTPTQGSVLFGTVNGMIGLVTSLSESWYNLLLDMQNRLNKVIKSVGKIEHSFWRSFHTERKTEPATGFIDGDLIESFLDISRPKMQEVVANLQYDDGSGMKREATADDLIKVVEELTRIH.

N-acetylserine is present on Ser2. Positions 2 to 768 (SYNYVVTAQK…QALSSSVSSS (767 aa)) are interaction with CDT1. The interval 13–356 (TAVNGCVTGH…VVAMETFTNL (344 aa)) is WD repeat beta-propeller A. The segment at 392-708 (NGIGIHEHAS…LTIGTIDEIQ (317 aa)) is WD repeat beta-propeller B; Interaction with CUL4A. Residues 709 to 1043 (KLHIRTVPLY…NGMIGLVTSL (335 aa)) are WD repeat beta-propeller C. An interaction with CDT1 and CUL4A region spans residues 771-1140 (FSSSTAPHET…KVVEELTRIH (370 aa)). At Lys1067 the chain carries N6-acetyllysine. A Glycyl lysine isopeptide (Lys-Gly) (interchain with G-Cter in SUMO2) cross-link involves residue Lys1121. Thr1125 is subject to Phosphothreonine.

The protein belongs to the DDB1 family. As to quaternary structure, component of the UV-DDB complex which includes DDB1 and DDB2; the heterodimer dimerizes to give rise to a heterotetramer when bound to damaged DNA. The UV-DDB complex interacts with monoubiquitinated histone H2A and binds to XPC via the DDB2 subunit. Component of numerous DCX (DDB1-CUL4-X-box) E3 ubiquitin-protein ligase complexes which consist of a core of DDB1, CUL4A or CUL4B and RBX1. DDB1 may recruit specific substrate targeting subunits to the DCX complex. These substrate targeting subunits are generally known as DCAF (DDB1- and CUL4-associated factor) or CDW (CUL4-DDB1-associated WD40-repeat) proteins. Interacts with AMBRA1, ATG16L1, BTRC, CRBN, DCAF1, DCAF4, DCAF5, DCAF6, DCAF7, DCAF8, DCAF9, DCAF10, DCAF11, DCAF12, DCAF15, DCAF16, DCAF17, DDA1, DET1, DTL, ERCC8, FBXW5, FBXW8, GRWD1, KATNB1, NLE1, NUP43, PAFAH1B1, PHIP, PWP1, RBBP4, RBBP5, RBBP7, COP1, SNRNP40, DCAF1, WDR5, WDR5B, WDR12, WDR26, WDR39, WDR42, WDR53, WDR59, WDR61, WSB1, WSB2, LRWD1 and WDTC1. DCX complexes may associate with the COP9 signalosome, and this inhibits the E3 ubiquitin-protein ligase activity of the complex. Interacts with NF2, TSC1 and TSC2. Interacts with AGO1 and AGO2. Associates with the E3 ligase complex containing DYRK2, EDD/UBR5, DDB1 and DCAF1 proteins (EDVP complex). Interacts directly with DYRK2. DCX(DTL) complex interacts with FBXO11; does not ubiquitinate and degradate FBXO11. Interacts with TRPC4AP. Interacts with CRY1 and CRY2. The DDB1-CUL4A complex interacts with CRY1. May also interact with DCUN1D1, DCUN1D2, DCUN1D3 and DCUN1D5. Component of the DCX(DCAF13) E3 ubiquitin ligase complex, at least composed of CUL4 (CUL4A or CUL4B), DDB1, DCAF13 and RBX1. Interacts with DCAF13 (via WD40 domain). (Microbial infection) Interacts with Simian virus 5 protein V. In terms of assembly, (Microbial infection) Interacts with hepatitis B virus protein HBX; the viral protein contains a short helical motif that competes for the same binding site as the N-terminal helical motif found in endogenous DCAF proteins. As to quaternary structure, (Microbial infection) Interacts with human cytomegalovirus protein UL145; this interaction promotes STAT2 degradation. (Microbial infection) Interacts with human cytomegalovirus protein RL1; this interaction allows RL1 to recruit the cullin4-RING E3 ubiquitin ligase (CRL4) complex and promote SLN11 degradation. Post-translationally, phosphorylated by ABL1. In terms of processing, ubiquitinated by CUL4A. Subsequently degraded by ubiquitin-dependent proteolysis. Acetylated, promoting interaction with CUL4 (CUL4A or CUL4B) and subsequent formation of DCX (DDB1-CUL4-X-box) E3 ubiquitin-protein ligase complexes. Deacetylation by SIRT7 impairs the interaction with CUL4 (CUL4A or CUL4B) and formation of DCX (DDB1-CUL4-X-box) E3 ubiquitin-protein ligase complexes.

It is found in the cytoplasm. Its subcellular location is the nucleus. The protein operates within protein modification; protein ubiquitination. In terms of biological role, protein, which is both involved in DNA repair and protein ubiquitination, as part of the UV-DDB complex and DCX (DDB1-CUL4-X-box) complexes, respectively. Core component of the UV-DDB complex (UV-damaged DNA-binding protein complex), a complex that recognizes UV-induced DNA damage and recruit proteins of the nucleotide excision repair pathway (the NER pathway) to initiate DNA repair. The UV-DDB complex preferentially binds to cyclobutane pyrimidine dimers (CPD), 6-4 photoproducts (6-4 PP), apurinic sites and short mismatches. Also functions as a component of numerous distinct DCX (DDB1-CUL4-X-box) E3 ubiquitin-protein ligase complexes which mediate the ubiquitination and subsequent proteasomal degradation of target proteins. The functional specificity of the DCX E3 ubiquitin-protein ligase complex is determined by the variable substrate recognition component recruited by DDB1. DCX(DDB2) (also known as DDB1-CUL4-ROC1, CUL4-DDB-ROC1 and CUL4-DDB-RBX1) may ubiquitinate histone H2A, histone H3 and histone H4 at sites of UV-induced DNA damage. The ubiquitination of histones may facilitate their removal from the nucleosome and promote subsequent DNA repair. DCX(DDB2) also ubiquitinates XPC, which may enhance DNA-binding by XPC and promote NER. DCX(DTL) plays a role in PCNA-dependent polyubiquitination of CDT1 and MDM2-dependent ubiquitination of TP53 in response to radiation-induced DNA damage and during DNA replication. DCX(ERCC8) (the CSA complex) plays a role in transcription-coupled repair (TCR). The DDB1-CUL4A-DTL E3 ligase complex regulates the circadian clock function by mediating the ubiquitination and degradation of CRY1. DDB1-mediated CRY1 degradation promotes FOXO1 protein stability and FOXO1-mediated gluconeogenesis in the liver. By acting on TET dioxygenses, essential for oocyte maintenance at the primordial follicle stage, hence essential for female fertility. Maternal factor required for proper zygotic genome activation and genome reprogramming. The protein is DNA damage-binding protein 1 (DDB1) of Homo sapiens (Human).